Consider the following 381-residue polypeptide: Queuine tRNA-ribosyltransferase (381 aa).

Aspartate 96 (proton acceptor) is an active-site residue. Residues 96–100 (DSGGF), aspartate 150, glutamine 193, and glycine 220 each bind substrate. Residues 251-257 (GVGSPDA) form an RNA binding region. The active-site Nucleophile is aspartate 270. Positions 275–279 (TRIAR) are RNA binding; important for wobble base 34 recognition. Zn(2+) contacts are provided by cysteine 308, cysteine 310, cysteine 313, and histidine 339.

Belongs to the queuine tRNA-ribosyltransferase family. Homodimer. Within each dimer, one monomer is responsible for RNA recognition and catalysis, while the other monomer binds to the replacement base PreQ1. The cofactor is Zn(2+).

The catalysed reaction is 7-aminomethyl-7-carbaguanine + guanosine(34) in tRNA = 7-aminomethyl-7-carbaguanosine(34) in tRNA + guanine. Its pathway is tRNA modification; tRNA-queuosine biosynthesis. In terms of biological role, catalyzes the base-exchange of a guanine (G) residue with the queuine precursor 7-aminomethyl-7-deazaguanine (PreQ1) at position 34 (anticodon wobble position) in tRNAs with GU(N) anticodons (tRNA-Asp, -Asn, -His and -Tyr). Catalysis occurs through a double-displacement mechanism. The nucleophile active site attacks the C1' of nucleotide 34 to detach the guanine base from the RNA, forming a covalent enzyme-RNA intermediate. The proton acceptor active site deprotonates the incoming PreQ1, allowing a nucleophilic attack on the C1' of the ribose to form the product. After dissociation, two additional enzymatic reactions on the tRNA convert PreQ1 to queuine (Q), resulting in the hypermodified nucleoside queuosine (7-(((4,5-cis-dihydroxy-2-cyclopenten-1-yl)amino)methyl)-7-deazaguanosine). This is Queuine tRNA-ribosyltransferase from Bacillus velezensis (strain DSM 23117 / BGSC 10A6 / LMG 26770 / FZB42) (Bacillus amyloliquefaciens subsp. plantarum).